We begin with the raw amino-acid sequence, 257 residues long: Triosephosphate isomerase (257 aa).

Position 9–11 (9–11 (NWK)) interacts with substrate. H95 serves as the catalytic Electrophile. E168 acts as the Proton acceptor in catalysis. Substrate contacts are provided by residues G174, S213, and 234 to 235 (GG).

The protein belongs to the triosephosphate isomerase family. In terms of assembly, homodimer.

It localises to the cytoplasm. The enzyme catalyses D-glyceraldehyde 3-phosphate = dihydroxyacetone phosphate. The protein operates within carbohydrate biosynthesis; gluconeogenesis. It functions in the pathway carbohydrate degradation; glycolysis; D-glyceraldehyde 3-phosphate from glycerone phosphate: step 1/1. Functionally, involved in the gluconeogenesis. Catalyzes stereospecifically the conversion of dihydroxyacetone phosphate (DHAP) to D-glyceraldehyde-3-phosphate (G3P). This is Triosephosphate isomerase from Acidithiobacillus ferrooxidans (strain ATCC 23270 / DSM 14882 / CIP 104768 / NCIMB 8455) (Ferrobacillus ferrooxidans (strain ATCC 23270)).